The following is a 292-amino-acid chain: 4-hydroxy-tetrahydrodipicolinate synthase (292 aa).

Thr44 is a pyruvate binding site. Tyr132 acts as the Proton donor/acceptor in catalysis. Catalysis depends on Lys161, which acts as the Schiff-base intermediate with substrate. Ile203 lines the pyruvate pocket.

This sequence belongs to the DapA family. In terms of assembly, homotetramer; dimer of dimers.

It localises to the cytoplasm. It carries out the reaction L-aspartate 4-semialdehyde + pyruvate = (2S,4S)-4-hydroxy-2,3,4,5-tetrahydrodipicolinate + H2O + H(+). It functions in the pathway amino-acid biosynthesis; L-lysine biosynthesis via DAP pathway; (S)-tetrahydrodipicolinate from L-aspartate: step 3/4. Its function is as follows. Catalyzes the condensation of (S)-aspartate-beta-semialdehyde [(S)-ASA] and pyruvate to 4-hydroxy-tetrahydrodipicolinate (HTPA). The sequence is that of 4-hydroxy-tetrahydrodipicolinate synthase from Fervidobacterium nodosum (strain ATCC 35602 / DSM 5306 / Rt17-B1).